Here is a 264-residue protein sequence, read N- to C-terminus: Thymidylate synthase (264 aa).

DUMP is bound at residue arginine 21. Residue histidine 51 coordinates (6R)-5,10-methylene-5,6,7,8-tetrahydrofolate. 126-127 contributes to the dUMP binding site; it reads RR. Cysteine 146 acts as the Nucleophile in catalysis. DUMP contacts are provided by residues 166–169, asparagine 177, and 207–209; these read RSCD and HLY. Aspartate 169 is a (6R)-5,10-methylene-5,6,7,8-tetrahydrofolate binding site. (6R)-5,10-methylene-5,6,7,8-tetrahydrofolate is bound at residue alanine 263.

It belongs to the thymidylate synthase family. Bacterial-type ThyA subfamily. In terms of assembly, homodimer.

The protein resides in the cytoplasm. It catalyses the reaction dUMP + (6R)-5,10-methylene-5,6,7,8-tetrahydrofolate = 7,8-dihydrofolate + dTMP. It functions in the pathway pyrimidine metabolism; dTTP biosynthesis. Its function is as follows. Catalyzes the reductive methylation of 2'-deoxyuridine-5'-monophosphate (dUMP) to 2'-deoxythymidine-5'-monophosphate (dTMP) while utilizing 5,10-methylenetetrahydrofolate (mTHF) as the methyl donor and reductant in the reaction, yielding dihydrofolate (DHF) as a by-product. This enzymatic reaction provides an intracellular de novo source of dTMP, an essential precursor for DNA biosynthesis. In Citrobacter koseri (strain ATCC BAA-895 / CDC 4225-83 / SGSC4696), this protein is Thymidylate synthase.